A 308-amino-acid chain; its full sequence is Protein translocase subunit SecF (308 aa).

6 helical membrane-spanning segments follow: residues 28-48 (SIIL…NFGI), 140-160 (IEAG…YIWV), 164-184 (WYFG…ALGF), 194-214 (LSTI…SVVI), 246-266 (ILTV…GGEA), and 272-292 (VLVF…SAPI).

It belongs to the SecD/SecF family. SecF subfamily. Forms a complex with SecD. Part of the essential Sec protein translocation apparatus which comprises SecA, SecYEG and auxiliary proteins SecDF-YajC and YidC.

Its subcellular location is the cell inner membrane. Functionally, part of the Sec protein translocase complex. Interacts with the SecYEG preprotein conducting channel. SecDF uses the proton motive force (PMF) to complete protein translocation after the ATP-dependent function of SecA. The sequence is that of Protein translocase subunit SecF from Rickettsia conorii (strain ATCC VR-613 / Malish 7).